A 490-amino-acid polypeptide reads, in one-letter code: tRNA-2-methylthio-N(6)-dimethylallyladenosine synthase (490 aa).

The MTTase N-terminal domain maps to 37 to 154; sequence KKVYIATQGC…LPELYDKSTT (118 aa). [4Fe-4S] cluster contacts are provided by cysteine 46, cysteine 83, cysteine 117, cysteine 198, cysteine 202, and cysteine 205. In terms of domain architecture, Radical SAM core spans 184–416; the sequence is KVEGYRAFVS…QKVIRDSTLK (233 aa). The TRAM domain occupies 419–487; that stretch reads EEMVGKTLRV…PHMVRGELVD (69 aa).

Belongs to the methylthiotransferase family. MiaB subfamily. Monomer. Requires [4Fe-4S] cluster as cofactor.

Its subcellular location is the cytoplasm. The catalysed reaction is N(6)-dimethylallyladenosine(37) in tRNA + (sulfur carrier)-SH + AH2 + 2 S-adenosyl-L-methionine = 2-methylsulfanyl-N(6)-dimethylallyladenosine(37) in tRNA + (sulfur carrier)-H + 5'-deoxyadenosine + L-methionine + A + S-adenosyl-L-homocysteine + 2 H(+). In terms of biological role, catalyzes the methylthiolation of N6-(dimethylallyl)adenosine (i(6)A), leading to the formation of 2-methylthio-N6-(dimethylallyl)adenosine (ms(2)i(6)A) at position 37 in tRNAs that read codons beginning with uridine. The sequence is that of tRNA-2-methylthio-N(6)-dimethylallyladenosine synthase from Psychrobacter sp. (strain PRwf-1).